A 1029-amino-acid chain; its full sequence is Chitin synthase 3 (1029 aa).

Residues methionine 1 to aspartate 29 form a disordered region. Asparagine 37 carries an N-linked (GlcNAc...) asparagine glycan. The span at alanine 46 to serine 71 shows a compositional bias: low complexity. 2 disordered regions span residues alanine 46–proline 105 and leucine 168–serine 209. The span at serine 76–serine 91 shows a compositional bias: polar residues. The span at alanine 191–aspartate 202 shows a compositional bias: basic and acidic residues. N-linked (GlcNAc...) asparagine glycans are attached at residues asparagine 401, asparagine 514, asparagine 527, and asparagine 689. 7 helical membrane-spanning segments follow: residues phenylalanine 723–phenylalanine 743, isoleucine 760–isoleucine 780, alanine 796–leucine 816, alanine 830–alanine 850, phenylalanine 860–cysteine 880, valine 963–alanine 983, and valine 998–serine 1018.

It belongs to the chitin synthase family. Class I subfamily.

Its subcellular location is the cell membrane. The protein resides in the cytoplasmic vesicle membrane. It catalyses the reaction [(1-&gt;4)-N-acetyl-beta-D-glucosaminyl](n) + UDP-N-acetyl-alpha-D-glucosamine = [(1-&gt;4)-N-acetyl-beta-D-glucosaminyl](n+1) + UDP + H(+). In terms of biological role, polymerizes chitin, a structural polymer of the cell wall and septum, by transferring the sugar moiety of UDP-GlcNAc to the non-reducing end of the growing chitin polymer. The sequence is that of Chitin synthase 3 from Mycosarcoma maydis (Corn smut fungus).